Consider the following 508-residue polypeptide: MGLPWYRVHTVVLNDPGRLLSVHIMHTALVSGWAGSMALYELAVFDPSDPVLDPMWRQGMFVIPFMTRLGITNSWGGWSISGGTVTNPGIWSYEGVAGAHIVFSGLCFLAAIWHWVYWDLEIFCDERTGKPSLDLPKIFGIHLFLAGVACFGFGAFHVTGLYGPGIWVSDPYGLTGKVQAVNPAWGAEGFDPFVPGGIASHHIAAGTLGILAGLFHLSVRPPQRLYKGLRMGNIETVLSSSIAAVFFAAFVVAGTMWYGSATTPIELFGPTRYQWDQGYFQQEIYRRVSDGLAENLSLSEAWSKIPEKLAFYDYIGNNPAKGGLFRAGSMDNGDGIAVGWLGHPVFRDKEGRELFVRRMPTFFETFPVVLVDEEGIVRADVPFRRAESKYSVEQVGVTVEFYGGELNGVSYSDPATVKKYARRAQLGEIFELDRATLKSDGVFRSSPRGWFTFGHATFALLFFFGHIWHGARTLFRDVFAGIDPDLDAQVEFGTFQKVGDPTTRRQAA.

A run of 6 helical transmembrane segments spans residues 21–36 (SVHIMHTALVSGWAGS), 101–115 (IVFSGLCFLAAIWHW), 140–156 (GIHLFLAGVACFGFGAF), 203–218 (IAAGTLGILAGLFHLS), 237–252 (VLSSSIAAVFFAAFVV), and 457–472 (TFALLFFFGHIWHGAR).

This sequence belongs to the PsbB/PsbC family. PsbB subfamily. As to quaternary structure, PSII is composed of 1 copy each of membrane proteins PsbA, PsbB, PsbC, PsbD, PsbE, PsbF, PsbH, PsbI, PsbJ, PsbK, PsbL, PsbM, PsbT, PsbX, PsbY, PsbZ, Psb30/Ycf12, at least 3 peripheral proteins of the oxygen-evolving complex and a large number of cofactors. It forms dimeric complexes. It depends on Binds multiple chlorophylls. PSII binds additional chlorophylls, carotenoids and specific lipids. as a cofactor.

It is found in the plastid. Its subcellular location is the chloroplast thylakoid membrane. One of the components of the core complex of photosystem II (PSII). It binds chlorophyll and helps catalyze the primary light-induced photochemical processes of PSII. PSII is a light-driven water:plastoquinone oxidoreductase, using light energy to abstract electrons from H(2)O, generating O(2) and a proton gradient subsequently used for ATP formation. The polypeptide is Photosystem II CP47 reaction center protein (Zea mays (Maize)).